The following is a 341-amino-acid chain: L-threonine 3-dehydrogenase (341 aa).

Residue C38 coordinates Zn(2+). Catalysis depends on charge relay system residues T40 and H43. Residues H63, E64, C93, C96, C99, and C107 each coordinate Zn(2+). Residues I175, D195, R200, L262 to I264, and I286 to Y287 each bind NAD(+).

The protein belongs to the zinc-containing alcohol dehydrogenase family. As to quaternary structure, homotetramer. Zn(2+) serves as cofactor.

The protein localises to the cytoplasm. It carries out the reaction L-threonine + NAD(+) = (2S)-2-amino-3-oxobutanoate + NADH + H(+). It functions in the pathway amino-acid degradation; L-threonine degradation via oxydo-reductase pathway; glycine from L-threonine: step 1/2. Catalyzes the NAD(+)-dependent oxidation of L-threonine to 2-amino-3-ketobutyrate. The chain is L-threonine 3-dehydrogenase from Shewanella sediminis (strain HAW-EB3).